The primary structure comprises 487 residues: Nitrate reductase beta chain (487 aa).

4Fe-4S ferredoxin-type domains lie at 7-36 (IGMV…RSGA), 172-203 (VFMM…KREE), and 205-234 (GIVL…FNWQ). [4Fe-4S] cluster-binding residues include cysteine 16, cysteine 19, cysteine 22, cysteine 26, cysteine 181, cysteine 184, and cysteine 189. Positions 193, 214, and 220 each coordinate [3Fe-4S] cluster. Residues cysteine 224, cysteine 241, cysteine 244, cysteine 256, and cysteine 260 each contribute to the [4Fe-4S] cluster site.

[4Fe-4S] cluster is required as a cofactor. It depends on [3Fe-4S] cluster as a cofactor.

The protein localises to the cell membrane. The catalysed reaction is nitrate + a quinol = a quinone + nitrite + H2O. Functionally, the beta chain is an electron transfer unit containing four cysteine clusters involved in the formation of iron-sulfur centers. Electrons are transferred from the gamma chain to the molybdenum cofactor of the alpha subunit. In Bacillus subtilis (strain 168), this protein is Nitrate reductase beta chain (narH).